The chain runs to 368 residues: MSETAKKVIVGMSGGVDSSVSAWLLQQQGYQVEGLFMKNWEEDDGEEYCTAAADLADAQAVCDKLGIELHTVNFAAEYWDNVFELFLAEYKAGRTPNPDILCNKEIKFKAFLEFAAEDLGADYIATGHYVRRADVDGKSRLLRGLDSNKDQSYFLYTLSHEQIAQSLFPVGELEKPQVRKIAEDLGLVTAKKKDSTGICFIGERKFREFLGRYLPAQPGKIITVDGDEIGEHQGLMYHTLGQRKGLGIGGTKEGTEEPWYVVDKDVENNILIVAQGHEHPRLMSVGLIAQQLHWVDREPFTGTMRCTVKTRYRQTDIPCTVKALDDDRIEVIFDEPVAAVTPGQSAVFYNGEVCLGGGIIEQRLPLPV.

ATP is bound by residues glycine 11 to serine 18 and methionine 37. Residues asparagine 97–aspartate 99 form an interaction with target base in tRNA region. Catalysis depends on cysteine 102, which acts as the Nucleophile. The cysteines at positions 102 and 199 are disulfide-linked. Position 127 (glycine 127) interacts with ATP. The interval lysine 149–glutamine 151 is interaction with tRNA. The Cysteine persulfide intermediate role is filled by cysteine 199. The segment at arginine 311 to tyrosine 312 is interaction with tRNA.

Belongs to the MnmA/TRMU family. As to quaternary structure, interacts with TusE.

It is found in the cytoplasm. The enzyme catalyses S-sulfanyl-L-cysteinyl-[protein] + uridine(34) in tRNA + AH2 + ATP = 2-thiouridine(34) in tRNA + L-cysteinyl-[protein] + A + AMP + diphosphate + H(+). In terms of biological role, catalyzes the 2-thiolation of uridine at the wobble position (U34) of tRNA(Lys), tRNA(Glu) and tRNA(Gln), leading to the formation of s(2)U34, the first step of tRNA-mnm(5)s(2)U34 synthesis. Sulfur is provided by IscS, via a sulfur-relay system. Binds ATP and its substrate tRNAs. This is tRNA-specific 2-thiouridylase MnmA from Escherichia coli (strain SMS-3-5 / SECEC).